Consider the following 142-residue polypeptide: Protein archease (142 aa).

Residues Asp-12, Asp-141, and Ile-142 each contribute to the Ca(2+) site.

It belongs to the archease family.

Its function is as follows. Activates the tRNA-splicing ligase complex by facilitating the enzymatic turnover of catalytic subunit RtcB. Acts by promoting the guanylylation of RtcB, a key intermediate step in tRNA ligation. Can also alter the NTP specificity of RtcB such that ATP, dGTP or ITP is used efficiently. This Pyrococcus furiosus (strain ATCC 43587 / DSM 3638 / JCM 8422 / Vc1) protein is Protein archease.